The primary structure comprises 497 residues: MNKEILAVVEAVSNEKSLPREKIFEALECALAIATKKKYDQEIDVRVKINRKNGNFETFRRWLVVNQVLQPTKEITLEAAKFEDVTVKVNDYIEDKMISVTFDRITTQTAKQVIVQKVREAERAMIVEQFRKYFGKILTGIVKKINRESITLDLGNNAEALILKEDMLPRENFRLGDRVRGVLYAIYPESRGAQLFVTRSKPEMLIELFKIEVPEIGEEIIEIKSAARDPGSRAKIAVKSNDKRVDAVGACVGMRGARVQAVSSELCGERIDIVLWDKNSAQFIINSMAPAEVSSIVLDEDRHTIDIAVDSNNLAQAIGRNGQNVRLASQLSGWEINVMTVDDLKLKHQEEKDKILNIFTKYLKIDQKISNILIDEGFSSIEELVYIPFNELLNINSITQELAYSIRESAKKALCAIELENKKVINERKLHKDLLNLKGMNQKLAFKLAKKNIFSLEDLAEQGIDDLIDIENLNSNTAGMLIMAARNICWFGNKTSA.

The S1 motif domain occupies 135–200 (GKILTGIVKK…RGAQLFVTRS (66 aa)). The KH domain maps to 302-372 (RHTIDIAVDS…LKIDQKISNI (71 aa)). Tandem repeats lie at residues 364 to 414 (KIDQ…KKAL) and 439 to 489 (GMNQ…RNIC). The 2 X 51 AA approximate repeats stretch occupies residues 364–489 (KIDQKISNIL…MLIMAARNIC (126 aa)).

Belongs to the NusA family. Monomer. Binds directly to the core enzyme of the DNA-dependent RNA polymerase and to nascent RNA.

It is found in the cytoplasm. Its function is as follows. Participates in both transcription termination and antitermination. This Buchnera aphidicola subsp. Baizongia pistaciae (strain Bp) protein is Transcription termination/antitermination protein NusA.